The chain runs to 461 residues: Phosphoglycerate kinase, chloroplastic (461 aa).

A chloroplast-targeting transit peptide spans 1–60; that stretch reads MALSMKMRANARVSGRRVAAVAPRVVPFSSASSSVLRSGFALRCLWTSAAWAALASVVEA. Ala82, Asp83, Asn85, Arg100, Ser122, His123, Gly125, Arg126, Arg182, His214, and Arg215 together coordinate (2R)-3-phosphoglycerate. Gly260 is an ADP binding site. Gly260 is a binding site for CDP. AMP-binding residues include Lys262 and Lys266. Lys266 contacts ATP. Gly284 provides a ligand contact to ADP. Residue Gly284 participates in CDP binding. AMP contacts are provided by Gly285 and Gly357. Gly285 and Gly357 together coordinate ATP. CDP-binding residues include Gly382 and Phe387. Phe387 is an ADP binding site. Glu388 contacts AMP. Residues Glu388, Asp419, and Ser420 each contribute to the ATP site. Position 419 (Asp419) interacts with Mg(2+).

The protein belongs to the phosphoglycerate kinase family. As to quaternary structure, monomer. It depends on Mg(2+) as a cofactor.

It is found in the plastid. The protein localises to the chloroplast. It catalyses the reaction (2R)-3-phosphoglycerate + ATP = (2R)-3-phospho-glyceroyl phosphate + ADP. Its pathway is carbohydrate biosynthesis; Calvin cycle. This chain is Phosphoglycerate kinase, chloroplastic, found in Chlamydomonas reinhardtii (Chlamydomonas smithii).